The chain runs to 1372 residues: DNA-directed RNA polymerase subunit beta (1372 aa).

The protein belongs to the RNA polymerase beta chain family. The RNAP catalytic core consists of 2 alpha, 1 beta, 1 beta' and 1 omega subunit. When a sigma factor is associated with the core the holoenzyme is formed, which can initiate transcription.

The catalysed reaction is RNA(n) + a ribonucleoside 5'-triphosphate = RNA(n+1) + diphosphate. Its function is as follows. DNA-dependent RNA polymerase catalyzes the transcription of DNA into RNA using the four ribonucleoside triphosphates as substrates. In Rickettsia bellii (strain OSU 85-389), this protein is DNA-directed RNA polymerase subunit beta.